Here is a 216-residue protein sequence, read N- to C-terminus: Ethylene-inducing xylanase (216 aa).

An N-terminal signal peptide occupies residues 1 to 19 (MVSFSSLFVAACAAVTAFA). The region spanning 28–216 (AITTSQQGTS…SSGSSDITVS (189 aa)) is the GH11 domain. Glutamate 112 (nucleophile) is an active-site residue. Glutamate 203 acts as the Proton donor in catalysis.

It belongs to the glycosyl hydrolase 11 (cellulase G) family.

Its subcellular location is the secreted. The catalysed reaction is Endohydrolysis of (1-&gt;4)-beta-D-xylosidic linkages in xylans.. It functions in the pathway glycan degradation; xylan degradation. Functionally, endo-1,4-beta-xylanase involved in the hydrolysis of xylan, a major structural heterogeneous polysaccharide found in plant biomass representing the second most abundant polysaccharide in the biosphere, after cellulose. Acts as a pathogen-associated molecular pattern (PAMP) that can trigger plant cell death. Triggers a series of immune responses in citrus fruit and enhanced the resistance of citrus and other fruit against fungal pathogens. The protein is Ethylene-inducing xylanase of Penicillium digitatum (strain Pd1 / CECT 20795) (Green mold).